Here is a 380-residue protein sequence, read N- to C-terminus: 1-deoxy-D-xylulose 5-phosphate reductoisomerase (380 aa).

Residues threonine 10, glycine 11, serine 12, isoleucine 13, glycine 36, arginine 37, asparagine 38, and asparagine 120 each contribute to the NADPH site. Lysine 121 contacts 1-deoxy-D-xylulose 5-phosphate. NADPH is bound at residue glutamate 122. Residue aspartate 146 participates in Mn(2+) binding. Residues serine 147, glutamate 148, serine 172, and histidine 195 each contribute to the 1-deoxy-D-xylulose 5-phosphate site. Glutamate 148 contacts Mn(2+). Position 201 (glycine 201) interacts with NADPH. Residues serine 208, asparagine 213, lysine 214, and glutamate 217 each contribute to the 1-deoxy-D-xylulose 5-phosphate site. Mn(2+) is bound at residue glutamate 217.

Belongs to the DXR family. Mg(2+) is required as a cofactor. Mn(2+) serves as cofactor.

It carries out the reaction 2-C-methyl-D-erythritol 4-phosphate + NADP(+) = 1-deoxy-D-xylulose 5-phosphate + NADPH + H(+). The protein operates within isoprenoid biosynthesis; isopentenyl diphosphate biosynthesis via DXP pathway; isopentenyl diphosphate from 1-deoxy-D-xylulose 5-phosphate: step 1/6. Functionally, catalyzes the NADPH-dependent rearrangement and reduction of 1-deoxy-D-xylulose-5-phosphate (DXP) to 2-C-methyl-D-erythritol 4-phosphate (MEP). The protein is 1-deoxy-D-xylulose 5-phosphate reductoisomerase of Listeria monocytogenes serotype 4b (strain F2365).